We begin with the raw amino-acid sequence, 529 residues long: Glutamyl-tRNA reductase (529 aa).

47-50 (TCNR) lines the substrate pocket. Residue Cys-48 is the Nucleophile of the active site. The tract at residues 56 to 80 (SPRQQAPAPPRPGSAPPPSDEELSR) is disordered. The span at 62 to 73 (PAPPRPGSAPPP) shows a compositional bias: pro residues. Residues Ser-125, 130–132 (EPQ), and Gln-136 contribute to the substrate site. 205-210 (GAGDMA) is a binding site for NADP(+). Residues 454-505 (RGAVDGPPTPRSARGAAPPASGARGGGSPRHADPRPQAAEDNGVYARQPGGR) form a disordered region. A compositionally biased stretch (low complexity) spans 464 to 475 (RSARGAAPPASG).

It belongs to the glutamyl-tRNA reductase family. In terms of assembly, homodimer.

It carries out the reaction (S)-4-amino-5-oxopentanoate + tRNA(Glu) + NADP(+) = L-glutamyl-tRNA(Glu) + NADPH + H(+). It participates in porphyrin-containing compound metabolism; protoporphyrin-IX biosynthesis; 5-aminolevulinate from L-glutamyl-tRNA(Glu): step 1/2. Functionally, catalyzes the NADPH-dependent reduction of glutamyl-tRNA(Glu) to glutamate 1-semialdehyde (GSA). This chain is Glutamyl-tRNA reductase, found in Sorangium cellulosum (strain So ce56) (Polyangium cellulosum (strain So ce56)).